We begin with the raw amino-acid sequence, 281 residues long: 3-methyl-2-oxobutanoate hydroxymethyltransferase (281 aa).

Positions 44 and 83 each coordinate Mg(2+). Residues 44 to 45 (DS), Asp-83, and Lys-112 each bind 3-methyl-2-oxobutanoate. Glu-114 is a binding site for Mg(2+). The active-site Proton acceptor is Glu-180. Residues 251 to 281 (RNGTFPGPEHSSRMDPAELAAALGSQDQATE) form a disordered region.

The protein belongs to the PanB family. As to quaternary structure, homodecamer; pentamer of dimers. Mg(2+) serves as cofactor.

Its subcellular location is the cytoplasm. The enzyme catalyses 3-methyl-2-oxobutanoate + (6R)-5,10-methylene-5,6,7,8-tetrahydrofolate + H2O = 2-dehydropantoate + (6S)-5,6,7,8-tetrahydrofolate. It functions in the pathway cofactor biosynthesis; (R)-pantothenate biosynthesis; (R)-pantoate from 3-methyl-2-oxobutanoate: step 1/2. Functionally, catalyzes the reversible reaction in which hydroxymethyl group from 5,10-methylenetetrahydrofolate is transferred onto alpha-ketoisovalerate to form ketopantoate. The chain is 3-methyl-2-oxobutanoate hydroxymethyltransferase from Chloroflexus aurantiacus (strain ATCC 29364 / DSM 637 / Y-400-fl).